A 90-amino-acid polypeptide reads, in one-letter code: Large ribosomal subunit protein uL23c (90 aa).

The protein belongs to the universal ribosomal protein uL23 family. Part of the 50S ribosomal subunit.

It localises to the plastid. It is found in the chloroplast. Functionally, binds to 23S rRNA. This chain is Large ribosomal subunit protein uL23c (rpl23), found in Tetradesmus obliquus (Green alga).